A 345-amino-acid polypeptide reads, in one-letter code: tRNA dimethylallyltransferase (345 aa).

9–16 (GPTASGKS) lines the ATP pocket. Residue 11 to 16 (TASGKS) participates in substrate binding. Interaction with substrate tRNA stretches follow at residues 34 to 37 (DSMQ) and 195 to 199 (QRMIR).

This sequence belongs to the IPP transferase family. In terms of assembly, monomer. It depends on Mg(2+) as a cofactor.

It catalyses the reaction adenosine(37) in tRNA + dimethylallyl diphosphate = N(6)-dimethylallyladenosine(37) in tRNA + diphosphate. Functionally, catalyzes the transfer of a dimethylallyl group onto the adenine at position 37 in tRNAs that read codons beginning with uridine, leading to the formation of N6-(dimethylallyl)adenosine (i(6)A). In Orientia tsutsugamushi (strain Boryong) (Rickettsia tsutsugamushi), this protein is tRNA dimethylallyltransferase.